The following is a 74-amino-acid chain: Large ribosomal subunit protein bL27c (74 aa).

This sequence belongs to the bacterial ribosomal protein bL27 family.

Its subcellular location is the plastid. The protein resides in the chloroplast. The polypeptide is Large ribosomal subunit protein bL27c (rpl27) (Calyptrosphaera sphaeroidea).